A 237-amino-acid chain; its full sequence is Leucyl/phenylalanyl-tRNA--protein transferase (237 aa).

It belongs to the L/F-transferase family.

Its subcellular location is the cytoplasm. The catalysed reaction is N-terminal L-lysyl-[protein] + L-leucyl-tRNA(Leu) = N-terminal L-leucyl-L-lysyl-[protein] + tRNA(Leu) + H(+). The enzyme catalyses N-terminal L-arginyl-[protein] + L-leucyl-tRNA(Leu) = N-terminal L-leucyl-L-arginyl-[protein] + tRNA(Leu) + H(+). It carries out the reaction L-phenylalanyl-tRNA(Phe) + an N-terminal L-alpha-aminoacyl-[protein] = an N-terminal L-phenylalanyl-L-alpha-aminoacyl-[protein] + tRNA(Phe). Functionally, functions in the N-end rule pathway of protein degradation where it conjugates Leu, Phe and, less efficiently, Met from aminoacyl-tRNAs to the N-termini of proteins containing an N-terminal arginine or lysine. The polypeptide is Leucyl/phenylalanyl-tRNA--protein transferase (Photobacterium profundum (strain SS9)).